The sequence spans 223 residues: 7-cyano-7-deazaguanine synthase (223 aa).

Residue 15–25 participates in ATP binding; sequence FSGGQDSTTCL. The Zn(2+) site is built by cysteine 191, cysteine 200, cysteine 203, and cysteine 206.

Belongs to the QueC family. As to quaternary structure, homodimer. Requires Zn(2+) as cofactor.

It carries out the reaction 7-carboxy-7-deazaguanine + NH4(+) + ATP = 7-cyano-7-deazaguanine + ADP + phosphate + H2O + H(+). The protein operates within purine metabolism; 7-cyano-7-deazaguanine biosynthesis. In terms of biological role, catalyzes the ATP-dependent conversion of 7-carboxy-7-deazaguanine (CDG) to 7-cyano-7-deazaguanine (preQ(0)). The protein is 7-cyano-7-deazaguanine synthase of Staphylococcus saprophyticus subsp. saprophyticus (strain ATCC 15305 / DSM 20229 / NCIMB 8711 / NCTC 7292 / S-41).